The primary structure comprises 212 residues: MVDPGVSPGCVRFVTLEISPSMTMQGERLDAVVAEAVAGDRNALREVLETIRPIVVRYCRARVGTVERSGLSADDVAQEVCLATITALPRYRDRGRPFLAFLYGIAAHKVADAHRAAGRDRAYPAETLPERWSADAGPEQMAIEADSVTRMNELLEILPAKQREILILRVVVGLSAEETAAAVGSTTGAVRVAQHRALQRLKDEIVAAGDYA.

The sigma-70 factor domain-2 stretch occupies residues 49-119; that stretch reads ETIRPIVVRY…VADAHRAAGR (71 aa). The Polymerase core binding signature appears at 75–78; it reads DVAQ. The tract at residues 152–201 is sigma-70 factor domain-4; sequence NELLEILPAKQREILILRVVVGLSAEETAAAVGSTTGAVRVAQHRALQRL. The segment at residues 176-195 is a DNA-binding region (H-T-H motif); it reads AEETAAAVGSTTGAVRVAQH.

It belongs to the sigma-70 factor family. ECF subfamily. As to quaternary structure, interacts transiently with the RNA polymerase catalytic core formed by RpoA, RpoB, RpoC and RpoZ (2 alpha, 1 beta, 1 beta' and 1 omega subunit) to form the RNA polymerase holoenzyme that can initiate transcription. Interacts (via sigma-70 factor domain 4) with RsdA.

Its function is as follows. Sigma factors are initiation factors that promote the attachment of RNA polymerase to specific initiation sites and are then released. Extracytoplasmic function (ECF) sigma factors are held in an inactive form by an anti-sigma factor until released by regulated intramembrane proteolysis. In Mycobacterium bovis (strain ATCC BAA-935 / AF2122/97), this protein is ECF RNA polymerase sigma factor SigD (sigD).